The primary structure comprises 93 residues: Small ribosomal subunit protein uS19 (93 aa).

The protein belongs to the universal ribosomal protein uS19 family.

Functionally, protein S19 forms a complex with S13 that binds strongly to the 16S ribosomal RNA. This Clostridium acetobutylicum (strain ATCC 824 / DSM 792 / JCM 1419 / IAM 19013 / LMG 5710 / NBRC 13948 / NRRL B-527 / VKM B-1787 / 2291 / W) protein is Small ribosomal subunit protein uS19.